Here is a 432-residue protein sequence, read N- to C-terminus: GTPase Obg (432 aa).

The region spanning 1-158 (MFVDQIKIEV…RKLKLELKVL (158 aa)) is the Obg domain. The 177-residue stretch at 159–335 (ADVGLVGFPS…LTHRTADVLE (177 aa)) folds into the OBG-type G domain. Residues 165–172 (GFPSVGKS), 190–194 (FTTLV), 212–215 (DLPG), 282–285 (SKMD), and 316–318 (SSL) each bind GTP. Residues serine 172 and threonine 192 each coordinate Mg(2+). Residues 354–432 (TFKEDEPAFK…IEDFTFEFVE (79 aa)) enclose the OCT domain.

This sequence belongs to the TRAFAC class OBG-HflX-like GTPase superfamily. OBG GTPase family. As to quaternary structure, monomer. Requires Mg(2+) as cofactor.

It is found in the cytoplasm. Functionally, an essential GTPase which binds GTP, GDP and possibly (p)ppGpp with moderate affinity, with high nucleotide exchange rates and a fairly low GTP hydrolysis rate. Plays a role in control of the cell cycle, stress response, ribosome biogenesis and in those bacteria that undergo differentiation, in morphogenesis control. In Ligilactobacillus salivarius (strain UCC118) (Lactobacillus salivarius), this protein is GTPase Obg.